Consider the following 378-residue polypeptide: Envelope glycoprotein M (378 aa).

Residues M1 to K16 lie on the Intravirion side of the membrane. Residues L17–F37 traverse the membrane as a helical segment. Residues P38 to T84 are Virion surface-facing. A helical transmembrane segment spans residues F85 to A105. Residues K106 to Q118 lie on the Intravirion side of the membrane. The chain crosses the membrane as a helical span at residues W119–I139. Over Q140–H150 the chain is Virion surface. A helical membrane pass occupies residues I151–C171. Topologically, residues Y172–Q210 are intravirion. A helical membrane pass occupies residues L211–N231. The Virion surface portion of the chain corresponds to S232 to D239. A helical membrane pass occupies residues I240–E260. Residues L261–T268 are Intravirion-facing. The helical transmembrane segment at F269–W289 threads the bilayer. The Virion surface segment spans residues R290–P303. The chain crosses the membrane as a helical span at residues I304–L324. Over R325–L378 the chain is Intravirion. Residues R347–L378 are disordered. Residues G363–L378 are compositionally biased toward acidic residues.

This sequence belongs to the herpesviridae glycoprotein M family. Interacts (via N-terminus) with gN (via N-terminus). The gM-gN heterodimer forms the gCII complex.

It is found in the virion membrane. The protein resides in the host Golgi apparatus. The protein localises to the host trans-Golgi network. It localises to the host endosome membrane. Its subcellular location is the host nucleus inner membrane. Functionally, envelope glycoprotein important for virion assembly and egress. Plays a role in the correct incorporation of gH-gL into virion membrane. Directs the glycoprotein N (gN) to the host trans-Golgi network. This Equus caballus (Horse) protein is Envelope glycoprotein M.